Here is a 203-residue protein sequence, read N- to C-terminus: Probable NADPH:quinone oxidoreductase 2 (203 aa).

It belongs to the SsuE family. As to quaternary structure, homotetramer. FMN is required as a cofactor.

It catalyses the reaction a quinone + NADH + H(+) = a quinol + NAD(+). The catalysed reaction is a quinone + NADPH + H(+) = a quinol + NADP(+). The enzyme apparently serves as a quinone reductase in connection with conjugation reactions of hydroquinones involved in detoxification pathways. This Oryza sativa subsp. japonica (Rice) protein is Probable NADPH:quinone oxidoreductase 2.